The chain runs to 206 residues: N-(5'-phosphoribosyl)anthranilate isomerase (206 aa).

It belongs to the TrpF family.

The enzyme catalyses N-(5-phospho-beta-D-ribosyl)anthranilate = 1-(2-carboxyphenylamino)-1-deoxy-D-ribulose 5-phosphate. It functions in the pathway amino-acid biosynthesis; L-tryptophan biosynthesis; L-tryptophan from chorismate: step 3/5. In Pseudomonas putida (strain W619), this protein is N-(5'-phosphoribosyl)anthranilate isomerase.